The following is a 619-amino-acid chain: UPF0329 protein ECU08_2070 (619 aa).

Composition is skewed to basic and acidic residues over residues 350–359 and 369–385; these read EREKREESKG and GAGEAKEESKEEDRKEE. The interval 350–425 is disordered; that stretch reads EREKREESKG…REKKMGEEHH (76 aa). The segment covering 386 to 396 has biased composition (acidic residues); sequence EGVEVEEEESA.

Belongs to the UPF0329 family.

The protein is UPF0329 protein ECU08_2070 of Encephalitozoon cuniculi (strain GB-M1) (Microsporidian parasite).